The primary structure comprises 194 residues: MQQLILASSSPRRQELLRQVGIPFVVAVPEVDEHAVHADSPAELVERLALRKARAVSVRYPGAIVLGADTIVVVDGEVLGKPADRAEAEWMLGRLSGRSHQVLTGVALVRGDEELVAHEETVVRFAPLSREQIQWYVETGEPMDKAGAYGIQGRAAALIASISGDYYNVVGLPLHRTVQMLTQFGYPIFTGGAG.

The Proton acceptor role is filled by D69.

This sequence belongs to the Maf family. YhdE subfamily. The cofactor is a divalent metal cation.

Its subcellular location is the cytoplasm. It catalyses the reaction dTTP + H2O = dTMP + diphosphate + H(+). It carries out the reaction UTP + H2O = UMP + diphosphate + H(+). Nucleoside triphosphate pyrophosphatase that hydrolyzes dTTP and UTP. May have a dual role in cell division arrest and in preventing the incorporation of modified nucleotides into cellular nucleic acids. This is dTTP/UTP pyrophosphatase from Symbiobacterium thermophilum (strain DSM 24528 / JCM 14929 / IAM 14863 / T).